The primary structure comprises 424 residues: CinA-like protein (424 aa).

Belongs to the CinA family.

The protein is CinA-like protein of Shewanella baltica (strain OS155 / ATCC BAA-1091).